The primary structure comprises 125 residues: Evasin P672 (125 aa).

The first 21 residues, 1 to 21 (MAHKIAIGLVCVLYALHIMSA), serve as a signal peptide directing secretion. N-linked (GlcNAc...) asparagine glycosylation is found at Asn35, Asn55, Asn65, Asn72, Asn78, Asn104, Asn112, and Asn118. 3 cysteine pairs are disulfide-bonded: Cys70-Cys110, Cys87-Cys115, and Cys105-Cys124.

Its subcellular location is the secreted. Its function is as follows. Salivary chemokine-binding protein which has chemokine-neutralizing activity and binds to host chemokines CCL1, CCL2, CCL3, CCL3L1, CCL7, CCL8, CCL11, CCL12, CCL13, CCL14, CCL15, CCL16, CCL18 and CCL23. Binds to CCL8 with 1:1 stoichiometry and disrupts CCL8 homodimer formation. The protein is Evasin P672 of Rhipicephalus pulchellus (Yellow backed tick).